Reading from the N-terminus, the 418-residue chain is Putative L-glutamine:3-amino-2,3-dideoxy-scyllo-inosose aminotransferase (418 aa).

K199 is subject to N6-(pyridoxal phosphate)lysine.

Belongs to the DegT/DnrJ/EryC1 family. L-glutamine:2-deoxy-scyllo-inosose/scyllo-inosose aminotransferase subfamily. Pyridoxal 5'-phosphate serves as cofactor.

It carries out the reaction 3-amino-2,3-dideoxy-scyllo-inosose + L-glutamine = 2-deoxystreptamine + 2-oxoglutaramate. It participates in metabolic intermediate biosynthesis; 2-deoxystreptamine biosynthesis; 2-deoxystreptamine from D-glucose 6-phosphate: step 4/4. Its pathway is antibiotic biosynthesis; gentamicin biosynthesis. Its function is as follows. Catalyzes the transamination of 3-amino-2,3-dideoxy-scyllo-inosose (amino-DOI) into 2-deoxystreptamine (DOS). The protein is Putative L-glutamine:3-amino-2,3-dideoxy-scyllo-inosose aminotransferase (gtmD) of Micromonospora echinospora (Micromonospora purpurea).